A 253-amino-acid polypeptide reads, in one-letter code: Tryptophan synthase alpha chain (253 aa).

Active-site proton acceptor residues include Glu-46 and Asp-57.

Belongs to the TrpA family. In terms of assembly, tetramer of two alpha and two beta chains.

It carries out the reaction (1S,2R)-1-C-(indol-3-yl)glycerol 3-phosphate + L-serine = D-glyceraldehyde 3-phosphate + L-tryptophan + H2O. It participates in amino-acid biosynthesis; L-tryptophan biosynthesis; L-tryptophan from chorismate: step 5/5. Functionally, the alpha subunit is responsible for the aldol cleavage of indoleglycerol phosphate to indole and glyceraldehyde 3-phosphate. This chain is Tryptophan synthase alpha chain, found in Dictyoglomus turgidum (strain DSM 6724 / Z-1310).